The following is a 203-amino-acid chain: Eukaryotic translation initiation factor isoform 4E (203 aa).

A compositionally biased stretch (low complexity) spans 1-25 (MATETAGAVVESSSAATVPSPAPEA). The tract at residues 1-27 (MATETAGAVVESSSAATVPSPAPEAGS) is disordered. MRNA-binding positions include 47-52 (QGAAWG), Lys-79, and 97-98 (WE). An intrachain disulfide couples Cys-102 to Cys-141. 148 to 153 (RQRQDK) is an mRNA binding site.

The protein belongs to the eukaryotic initiation factor 4E family. EIF4F is a multi-subunit complex, the composition of which varies with external and internal environmental conditions. It is composed of at least EIF4A, EIF4E and EIF4G. EIF4E is also known to interact with other partners. In higher plants two isoforms of EIF4F have been identified, named isoform EIF4F and isoform EIF(iso)4F. Isoform EIF4F has subunits p220 and p26, whereas isoform EIF(iso)4F has subunits p82 and p28. In terms of assembly, (Microbial infection) Interacts with the potyvirus peanut stripe virus (PStV) helper component proteinase (HC-Pro) in the cytoplasm and with PStV viral genome-linked protein (VPg) in the nucleus; these interactions are possible in susceptible hosts but impaired in resistant plants. In terms of processing, according to the redox status, the Cys-102-Cys-141 disulfide bridge may have a role in regulating protein function by affecting its ability to bind capped mRNA. As to expression, expressed ubiquitously with highest levels in young leaves and roots, and lowest levels in flowers.

Its subcellular location is the cytoplasm. The protein resides in the nucleus. Its function is as follows. Component of the protein complex eIF4F, which is involved in the recognition of the mRNA cap, ATP-dependent unwinding of 5'-terminal secondary structure and recruitment of mRNA to the ribosome. Recognizes and binds the 7-methylguanosine-containing mRNA cap during an early step in the initiation of protein synthesis and facilitates ribosome binding by inducing the unwinding of the mRNAs secondary structures. Key component of recessive resistance to potyviruses such as peanut stripe virus (PStV). In terms of biological role, (Microbial infection) Susceptibility host factor required for viral infection by recruiting viral RNAs to the host ribosomal complex via an interaction with viral genome-linked protein (VPg). The protein is Eukaryotic translation initiation factor isoform 4E of Arachis hypogaea (Peanut).